The following is a 178-amino-acid chain: 2-oxo-4-hydroxy-4-carboxy-5-ureidoimidazoline decarboxylase (178 aa).

The active-site Proton donor is the histidine 67. Residues proline 68, 84–88, and 119–123 contribute to the substrate site; these read SQREQ and FVLAA.

The protein belongs to the OHCU decarboxylase family.

It is found in the peroxisome. The enzyme catalyses 5-hydroxy-2-oxo-4-ureido-2,5-dihydro-1H-imidazole-5-carboxylate + H(+) = (S)-allantoin + CO2. Its pathway is purine metabolism; urate degradation; (S)-allantoin from urate: step 3/3. In terms of biological role, catalyzes the stereoselective decarboxylation of 2-oxo-4-hydroxy-4-carboxy-5-ureidoimidazoline (OHCU) to (S)-allantoin. This chain is 2-oxo-4-hydroxy-4-carboxy-5-ureidoimidazoline decarboxylase (Urad), found in Mus musculus (Mouse).